The primary structure comprises 700 residues: Acetyl-coenzyme A carboxylase carboxyl transferase subunit beta, chloroplastic (700 aa).

Zn(2+) contacts are provided by C34, C37, C53, and C56. The C4-type zinc-finger motif lies at 34–56 (CENCETLIYKKSLLEQKGVCAEC). The CoA carboxyltransferase N-terminal domain occupies 445–700 (KKGRDTKDTE…ETIEIYMYGD (256 aa)).

This sequence belongs to the AccD/PCCB family. In terms of assembly, acetyl-CoA carboxylase is a heterohexamer composed of biotin carboxyl carrier protein, biotin carboxylase and 2 subunits each of ACCase subunit alpha and ACCase plastid-coded subunit beta (accD). It depends on Zn(2+) as a cofactor.

Its subcellular location is the plastid. It is found in the chloroplast stroma. It catalyses the reaction N(6)-carboxybiotinyl-L-lysyl-[protein] + acetyl-CoA = N(6)-biotinyl-L-lysyl-[protein] + malonyl-CoA. The protein operates within lipid metabolism; malonyl-CoA biosynthesis; malonyl-CoA from acetyl-CoA: step 1/1. Functionally, component of the acetyl coenzyme A carboxylase (ACC) complex. Biotin carboxylase (BC) catalyzes the carboxylation of biotin on its carrier protein (BCCP) and then the CO(2) group is transferred by the transcarboxylase to acetyl-CoA to form malonyl-CoA. In Cryptomeria japonica (Japanese cedar), this protein is Acetyl-coenzyme A carboxylase carboxyl transferase subunit beta, chloroplastic.